A 206-amino-acid chain; its full sequence is LexA repressor (206 aa).

Residues 28 to 48 (RAEIAKRLGFKSANAAEEHLK) constitute a DNA-binding region (H-T-H motif). Active-site for autocatalytic cleavage activity residues include S123 and K160.

It belongs to the peptidase S24 family. In terms of assembly, homodimer.

The enzyme catalyses Hydrolysis of Ala-|-Gly bond in repressor LexA.. Functionally, represses a number of genes involved in the response to DNA damage (SOS response), including recA and lexA. In the presence of single-stranded DNA, RecA interacts with LexA causing an autocatalytic cleavage which disrupts the DNA-binding part of LexA, leading to derepression of the SOS regulon and eventually DNA repair. This Shewanella sediminis (strain HAW-EB3) protein is LexA repressor.